The chain runs to 255 residues: Indole-3-glycerol phosphate synthase (255 aa).

This sequence belongs to the TrpC family.

It carries out the reaction 1-(2-carboxyphenylamino)-1-deoxy-D-ribulose 5-phosphate + H(+) = (1S,2R)-1-C-(indol-3-yl)glycerol 3-phosphate + CO2 + H2O. Its pathway is amino-acid biosynthesis; L-tryptophan biosynthesis; L-tryptophan from chorismate: step 4/5. The sequence is that of Indole-3-glycerol phosphate synthase from Streptococcus thermophilus (strain ATCC BAA-491 / LMD-9).